The primary structure comprises 946 residues: Bifunctional glutamine synthetase adenylyltransferase/adenylyl-removing enzyme (946 aa).

The interval 1-440 (MKPLSSPLQQ…VFNELIGDDE (440 aa)) is adenylyl removase. Residues 449–946 (SEQWRELWQD…ASWQKWLVEE (498 aa)) are adenylyl transferase.

This sequence belongs to the GlnE family. The cofactor is Mg(2+).

The catalysed reaction is [glutamine synthetase]-O(4)-(5'-adenylyl)-L-tyrosine + phosphate = [glutamine synthetase]-L-tyrosine + ADP. It carries out the reaction [glutamine synthetase]-L-tyrosine + ATP = [glutamine synthetase]-O(4)-(5'-adenylyl)-L-tyrosine + diphosphate. Its function is as follows. Involved in the regulation of glutamine synthetase GlnA, a key enzyme in the process to assimilate ammonia. When cellular nitrogen levels are high, the C-terminal adenylyl transferase (AT) inactivates GlnA by covalent transfer of an adenylyl group from ATP to specific tyrosine residue of GlnA, thus reducing its activity. Conversely, when nitrogen levels are low, the N-terminal adenylyl removase (AR) activates GlnA by removing the adenylyl group by phosphorolysis, increasing its activity. The regulatory region of GlnE binds the signal transduction protein PII (GlnB) which indicates the nitrogen status of the cell. This chain is Bifunctional glutamine synthetase adenylyltransferase/adenylyl-removing enzyme, found in Escherichia coli O6:H1 (strain CFT073 / ATCC 700928 / UPEC).